Reading from the N-terminus, the 179-residue chain is Large ribosomal subunit protein uL6 (179 aa).

It belongs to the universal ribosomal protein uL6 family. In terms of assembly, part of the 50S ribosomal subunit.

This protein binds to the 23S rRNA, and is important in its secondary structure. It is located near the subunit interface in the base of the L7/L12 stalk, and near the tRNA binding site of the peptidyltransferase center. The sequence is that of Large ribosomal subunit protein uL6 from Clostridium novyi (strain NT).